The sequence spans 175 residues: MTTIITVRKGGKVVMAGDGQVSLGQTVMKGNARKVRRIGKGEVVAGFAGATADAFTLLERLEKKLEQYPGQLMRAAVELAKDWRTDKYLRNLEAMMLVADKSITLAITGNGDVLEPEHGTTAIGSGGNFALAAALALMDTDKSAEEIARRALDIAADICVYTNHNVVVELLDAEG.

Residue threonine 2 is part of the active site. Residues alanine 156, cysteine 159, and threonine 162 each contribute to the Na(+) site.

It belongs to the peptidase T1B family. HslV subfamily. In terms of assembly, a double ring-shaped homohexamer of HslV is capped on each side by a ring-shaped HslU homohexamer. The assembly of the HslU/HslV complex is dependent on binding of ATP.

It is found in the cytoplasm. It carries out the reaction ATP-dependent cleavage of peptide bonds with broad specificity.. With respect to regulation, allosterically activated by HslU binding. Protease subunit of a proteasome-like degradation complex believed to be a general protein degrading machinery. In Rhizobium johnstonii (strain DSM 114642 / LMG 32736 / 3841) (Rhizobium leguminosarum bv. viciae), this protein is ATP-dependent protease subunit HslV.